The chain runs to 312 residues: Taste receptor type 2 member 9 (312 aa).

Residues 1-9 (MPSAIEAIY) are Extracellular-facing. A helical transmembrane segment spans residues 10 to 32 (IILIAGELTIGIWGNGFIVLVNC). Topologically, residues 33–52 (IDWLKRRDISLIDIILISLA) are cytoplasmic. Residues 53–72 (ISRICLLCVISLDGFFMLLF) traverse the membrane as a helical segment. At 73–86 (PGTYGNSVLVSIVN) the chain is on the extracellular side. Residues 87–109 (VVWTFANNSSLWFTSCLSIFYLL) form a helical membrane-spanning segment. Over 110–128 (KIANISHPFFFWLKLKINK) the chain is Cytoplasmic. The chain crosses the membrane as a helical span at residues 129–146 (VMLAILLGSFLISLIISV). Over 147 to 180 (PKNDDMWYHLFKVSHEENITWKFKVSKIPGTFKQ) the chain is Extracellular. Asn164 is a glycosylation site (N-linked (GlcNAc...) asparagine). A helical transmembrane segment spans residues 181 to 203 (LTLNLGVMVPFILCLISFFLLLF). The Cytoplasmic segment spans residues 204–234 (SLVRHTKQIRLHATGFRDPSTEAHMRAIKAV). A helical membrane pass occupies residues 235–257 (IIFLLLLIVYYPVFLVMTSSALI). Residues 258 to 261 (PQGK) are Extracellular-facing. The helical transmembrane segment at 262-284 (LVLMIGDIVTVIFPSSHSFILIM) threads the bilayer. The Cytoplasmic segment spans residues 285-312 (GNSKLREAFLKMLRFVKCFLRRRKPFVP).

This sequence belongs to the G-protein coupled receptor T2R family. Expressed in subsets of taste receptor cells of the tongue and palate epithelium and exclusively in gustducin-positive cells.

The protein localises to the membrane. In terms of biological role, gustducin-coupled receptor implicated in the perception of bitter compounds in the oral cavity and the gastrointestinal tract. Signals through PLCB2 and the calcium-regulated cation channel TRPM5. This is Taste receptor type 2 member 9 (TAS2R9) from Homo sapiens (Human).